The chain runs to 807 residues: Glycerol-3-phosphate acyltransferase (807 aa).

The HXXXXD motif motif lies at 308 to 313; sequence CHRSHM.

This sequence belongs to the GPAT/DAPAT family.

It is found in the cell inner membrane. It catalyses the reaction sn-glycerol 3-phosphate + an acyl-CoA = a 1-acyl-sn-glycero-3-phosphate + CoA. Its pathway is phospholipid metabolism; CDP-diacylglycerol biosynthesis; CDP-diacylglycerol from sn-glycerol 3-phosphate: step 1/3. The protein is Glycerol-3-phosphate acyltransferase of Shewanella baltica (strain OS223).